A 627-amino-acid chain; its full sequence is Neutral endopeptidase (627 aa).

A Peptidase M13 domain is found at 1–627 (MTRIQDDLFA…RAPENRLKIW (627 aa)). His475 contributes to the Zn(2+) binding site. Glu476 is a catalytic residue. 2 residues coordinate Zn(2+): His479 and Glu535. Asp539 acts as the Proton donor in catalysis.

The protein belongs to the peptidase M13 family. As to quaternary structure, monomer. It depends on Zn(2+) as a cofactor.

In terms of biological role, endopeptidase with broad substrate specificity for several oligopeptides. The protein is Neutral endopeptidase (pepO) of Lactococcus lactis subsp. lactis (strain IL1403) (Streptococcus lactis).